Here is a 147-residue protein sequence, read N- to C-terminus: Large ribosomal subunit protein bL9 (147 aa).

This sequence belongs to the bacterial ribosomal protein bL9 family.

Functionally, binds to the 23S rRNA. This is Large ribosomal subunit protein bL9 from Campylobacter hominis (strain ATCC BAA-381 / DSM 21671 / CCUG 45161 / LMG 19568 / NCTC 13146 / CH001A).